The following is a 175-amino-acid chain: MAKALEQPFDVANIPGPKMATLLEKGKPVANMIKKAKRPLLIVGPDMTDEMFERVKKFVEKDITVVATGSAITRFIDAGLGEKVNYAVLHELTQFLLDPDWKGFDGQGNYDLVLMLGSIYYHGSQMLAAIKNFAPHIRALAIDRYYHPNADMSFGNLWKKEEDYLKLLDEILAEL.

The protein belongs to the CdhB family. In terms of assembly, heterotetramer of two alpha and two epsilon subunits. The ACDS complex is made up of alpha, epsilon, beta, gamma and delta subunits with a probable stoichiometry of (alpha(2)epsilon(2))(4)-beta(8)-(gamma(1)delta(1))(8).

Its function is as follows. Part of a complex that catalyzes the reversible cleavage of acetyl-CoA, allowing autotrophic growth from CO(2). The alpha-epsilon subcomponent functions as a carbon monoxide dehydrogenase. The precise role of the epsilon subunit is unclear; it may have a stabilizing role within the alpha(2)epsilon(2) component and/or be involved in electron transfer to FAD during a potential FAD-mediated CO oxidation. The protein is Acetyl-CoA decarbonylase/synthase complex subunit epsilon 2 (cdhB2) of Archaeoglobus fulgidus (strain ATCC 49558 / DSM 4304 / JCM 9628 / NBRC 100126 / VC-16).